Consider the following 268-residue polypeptide: Hydroxyethylthiazole kinase (268 aa).

Methionine 49 contacts substrate. 2 residues coordinate ATP: lysine 124 and threonine 168. Substrate is bound at residue alanine 195.

It belongs to the Thz kinase family. Mg(2+) serves as cofactor.

The catalysed reaction is 5-(2-hydroxyethyl)-4-methylthiazole + ATP = 4-methyl-5-(2-phosphooxyethyl)-thiazole + ADP + H(+). It functions in the pathway cofactor biosynthesis; thiamine diphosphate biosynthesis; 4-methyl-5-(2-phosphoethyl)-thiazole from 5-(2-hydroxyethyl)-4-methylthiazole: step 1/1. Catalyzes the phosphorylation of the hydroxyl group of 4-methyl-5-beta-hydroxyethylthiazole (THZ). This Archaeoglobus fulgidus (strain ATCC 49558 / DSM 4304 / JCM 9628 / NBRC 100126 / VC-16) protein is Hydroxyethylthiazole kinase.